Here is a 186-residue protein sequence, read N- to C-terminus: Adenine phosphoribosyltransferase (186 aa).

This sequence belongs to the purine/pyrimidine phosphoribosyltransferase family. As to quaternary structure, homodimer.

It is found in the cytoplasm. The enzyme catalyses AMP + diphosphate = 5-phospho-alpha-D-ribose 1-diphosphate + adenine. It participates in purine metabolism; AMP biosynthesis via salvage pathway; AMP from adenine: step 1/1. Functionally, catalyzes a salvage reaction resulting in the formation of AMP, that is energically less costly than de novo synthesis. This Sulfurovum sp. (strain NBC37-1) protein is Adenine phosphoribosyltransferase.